The sequence spans 582 residues: DNA mismatch repair protein MutL (582 aa).

This sequence belongs to the DNA mismatch repair MutL/HexB family.

In terms of biological role, this protein is involved in the repair of mismatches in DNA. It is required for dam-dependent methyl-directed DNA mismatch repair. May act as a 'molecular matchmaker', a protein that promotes the formation of a stable complex between two or more DNA-binding proteins in an ATP-dependent manner without itself being part of a final effector complex. The chain is DNA mismatch repair protein MutL from Acidiphilium cryptum (strain JF-5).